The following is a 241-amino-acid chain: MATVSMRDMLKAGVHFGHQTRYWNPKMKPFIFGARNKVHIINLEKTVPMFNEALAELNKISARKGKILFVGTKRAASEAVKEAANSCDQFFVNHRWLGGMLTNWKTVRQSIKRLKDLETQSQDGTFDKLTKKEALMRTRELDKLENSLGGIKDMGGLPDALFVIDADHEHIAIKEANNLGIPVFAIVDTNSDPDGVDFVIPGNDDAIRAVSLYLGAVAATVREGRSQDLASQAEESFVEAE.

Belongs to the universal ribosomal protein uS2 family.

This is Small ribosomal subunit protein uS2 from Klebsiella pneumoniae (strain 342).